The sequence spans 142 residues: Hemoglobin subunit beta-2 (142 aa).

The 141-residue stretch at 2–142 folds into the Globin domain; sequence SLTDEEKHLI…VTEALSCQYH (141 aa). Heme b contacts are provided by His-59 and His-88.

It belongs to the globin family. As to quaternary structure, heterotetramer of two alpha chains and two beta chains. As to expression, red blood cells.

Functionally, involved in oxygen transport from the lung to the various peripheral tissues. The protein is Hemoglobin subunit beta-2 (HBB2) of Torpedo marmorata (Marbled electric ray).